The chain runs to 371 residues: Bifunctional enzyme IspD/IspF (371 aa).

The 2-C-methyl-D-erythritol 4-phosphate cytidylyltransferase stretch occupies residues M1 to I214. Residues K215–D371 form a 2-C-methyl-D-erythritol 2,4-cyclodiphosphate synthase region. Residues D221 and H223 each contribute to the a divalent metal cation site. 4-CDP-2-C-methyl-D-erythritol 2-phosphate is bound by residues D221–H223 and H247–S248. H255 provides a ligand contact to a divalent metal cation. 4-CDP-2-C-methyl-D-erythritol 2-phosphate-binding positions include D269–G271, F274–N278, and K355.

The protein in the N-terminal section; belongs to the IspD/TarI cytidylyltransferase family. IspD subfamily. It in the C-terminal section; belongs to the IspF family. A divalent metal cation is required as a cofactor.

The catalysed reaction is 2-C-methyl-D-erythritol 4-phosphate + CTP + H(+) = 4-CDP-2-C-methyl-D-erythritol + diphosphate. The enzyme catalyses 4-CDP-2-C-methyl-D-erythritol 2-phosphate = 2-C-methyl-D-erythritol 2,4-cyclic diphosphate + CMP. The protein operates within isoprenoid biosynthesis; isopentenyl diphosphate biosynthesis via DXP pathway; isopentenyl diphosphate from 1-deoxy-D-xylulose 5-phosphate: step 2/6. It functions in the pathway isoprenoid biosynthesis; isopentenyl diphosphate biosynthesis via DXP pathway; isopentenyl diphosphate from 1-deoxy-D-xylulose 5-phosphate: step 4/6. In terms of biological role, bifunctional enzyme that catalyzes the formation of 4-diphosphocytidyl-2-C-methyl-D-erythritol from CTP and 2-C-methyl-D-erythritol 4-phosphate (MEP) (IspD), and catalyzes the conversion of 4-diphosphocytidyl-2-C-methyl-D-erythritol 2-phosphate (CDP-ME2P) to 2-C-methyl-D-erythritol 2,4-cyclodiphosphate (ME-CPP) with a corresponding release of cytidine 5-monophosphate (CMP) (IspF). In Pelagibacter ubique (strain HTCC1062), this protein is Bifunctional enzyme IspD/IspF.